Here is a 185-residue protein sequence, read N- to C-terminus: Nuclear transcription factor Y subunit B-3 (185 aa).

Residues 1 to 36 are compositionally biased toward gly residues; the sequence is MADGPGSPGGGGGSHESGSPRGGGGGGGGGGGGGGV. Residues 1–39 form a disordered region; that stretch reads MADGPGSPGGGGGSHESGSPRGGGGGGGGGGGGGGVREQ. Residues 43–49 mediate DNA binding; it reads LPIANIS. Residues 70-81 form a subunit association domain (SAD) region; the sequence is VQECVSEFISFI. The interval 145–164 is disordered; that stretch reads KDVLGSHGGSSSSAQGMGQQ. A compositionally biased stretch (low complexity) spans 153-164; that stretch reads GSSSSAQGMGQQ.

This sequence belongs to the NFYB/HAP3 subunit family. As to quaternary structure, heterotrimeric transcription factor composed of three components, NF-YA, NF-YB and NF-YC. NF-YB and NF-YC must interact and dimerize for NF-YA association and DNA binding. Ubiquitous.

The protein resides in the nucleus. Component of the NF-Y/HAP transcription factor complex. The NF-Y complex stimulates the transcription of various genes by recognizing and binding to a CCAAT motif in promoters. May regulate the expression of photosynthetic genes, and may be involved in chloroplast and amyloplast development. The sequence is that of Nuclear transcription factor Y subunit B-3 (NFYB3) from Oryza sativa subsp. japonica (Rice).